Reading from the N-terminus, the 420-residue chain is Tyrosine--tRNA ligase (420 aa).

Tyr36 provides a ligand contact to L-tyrosine. The 'HIGH' region signature appears at Pro41–His50. The L-tyrosine site is built by Tyr170 and Gln174. The short motif at Lys231 to Thr235 is the 'KMSKS' region element. Lys234 contacts ATP. An S4 RNA-binding domain is found at Arg353–Lys420.

The protein belongs to the class-I aminoacyl-tRNA synthetase family. TyrS type 1 subfamily. In terms of assembly, homodimer.

Its subcellular location is the cytoplasm. It catalyses the reaction tRNA(Tyr) + L-tyrosine + ATP = L-tyrosyl-tRNA(Tyr) + AMP + diphosphate + H(+). Catalyzes the attachment of tyrosine to tRNA(Tyr) in a two-step reaction: tyrosine is first activated by ATP to form Tyr-AMP and then transferred to the acceptor end of tRNA(Tyr). The protein is Tyrosine--tRNA ligase of Staphylococcus saprophyticus subsp. saprophyticus (strain ATCC 15305 / DSM 20229 / NCIMB 8711 / NCTC 7292 / S-41).